We begin with the raw amino-acid sequence, 265 residues long: Serine protease harobin (265 aa).

Positions 1 to 18 (MPLIRVLASLLILQLSYG) are cleaved as a signal peptide. Positions 19 to 33 (KSLDNGAKAITSLDR) are excised as a propeptide. The Peptidase S1 domain maps to 34–257 (IIGGFECNPS…YKDWIEGIIA (224 aa)). 7 disulfide bridges follow: Cys-40–Cys-172, Cys-59–Cys-75, Cys-106–Cys-152, Cys-107–Cys-264, Cys-151–Cys-218, Cys-183–Cys-197, and Cys-208–Cys-233. His-74 (charge relay system) is an active-site residue. An N-linked (GlcNAc...) asparagine glycan is attached at Asn-112. Asp-119 functions as the Charge relay system in the catalytic mechanism. An N-linked (GlcNAc...) asparagine glycan is attached at Asn-130. Residue Ser-212 is the Charge relay system of the active site.

Belongs to the peptidase S1 family. Snake venom subfamily. As to quaternary structure, monomer. In terms of processing, harobin contains three additional Cys residues than other snake venom serine proteases, suggesting an additional disulfide bond. In addition, it is more stable than other snake 6-disulfide-bond serine proteases, since it is less sensitive to DTT. Expressed by the venom gland.

It is found in the secreted. Inhibited by PMSF. Its function is as follows. Serine protein with fibrinolytic and fibrinogenolytic activities. Degrades Bbeta-chain (FGB) of fibrinogen first and then the Aalpha-chain (FGA). Gamma-chain (FGG) are also digested on prolonged incubation. In vitro, it cleaves high molecular weight (HMW) kininogen (KNG) releasing bradykinin that promotes vasodilation. In vitro and in vivo, it cleaves angiotensin-2 (AGT). This explains the reduction of blood pressure in hypertensive rats. Also has antithrombotic effects on thrombosis animal models. The polypeptide is Serine protease harobin (Hydrophis hardwickii (Hardwick's spine-bellied seasnake)).